Reading from the N-terminus, the 687-residue chain is MATKQLAKQLGLIRRSSKTSQTSSNVSRPKARQFFEYLIIIDFESTCWKDGKHSTQEIIEFPAVLLNVSNGEIESEFHTYVQPQEHPILSDFCTELTGINQQQVDDGVPLKICLSQFNSWIQKLQKEKGIAFVTAVPTHSTAEHKMCAFVTWSDWDLGVCLLYECRRKQMKKPDILNSWIDLRATYKLFYNRRPKGLNGALQDLGIEFSGREHSGLDDSRNTAKLASRMICDGCVMKITKSLDKVNHKISYTRPQQVLPAQDSNSVQVGTIQTSEMHSEKNPQPSFDKTAACVNVMNLQKDLEPSSLKINGKPIGRDKAVTMLNGHQGQESLPSQTLINGLSTTLGNGPKRCFTNRTSLGTLQTGVSLGAFTSTPAELPSLGSGHVLMSTTVTSVTDISALDISSTSDCLSMLADWEDAAVIEDSQEEPSVPTTEQSDLLMAQTSVDVTLPGTNMANCNRNQKYGSFHPHSIAYQSRNTTIYNINVKQNVSSCSTFKVPGVLARRSTNMMPTSAQLNKMSTSLPSFPKRKLSSVSFYSPPKKQPFIIHEDKCSSNNRSLPVISSRPHNVPPTVLNATVNNTFKSAQTGKITAPMCNCGRRAKRLTVSNAGPNQGKAFYTCSVKKRNEENKKGCDYFKWEQTVVKEKSAQSTIILSKSGISFSSNTSFTAANSASRRSFVSLRPSMRT.

The Exonuclease domain occupies 38-226 (LIIIDFESTC…DDSRNTAKLA (189 aa)). Asp42, Glu44, and Asp156 together coordinate Mg(2+). Glu44 functions as the Proton acceptor in the catalytic mechanism. Position 44 (Glu44) interacts with AMP. The active-site Proton acceptor is His213. His213 contributes to the AMP binding site. Asp218 serves as a coordination point for Mg(2+). 4 residues coordinate Zn(2+): Cys595, Cys597, Cys620, and Cys633. The segment at 595-642 (CNCGRRAKRLTVSNAGPNQGKAFYTCSVKKRNEENKKGCDYFKWEQTV) adopts a GRF-type zinc-finger fold.

It belongs to the ERI2 family. Mg(2+) is required as a cofactor.

The sequence is that of ERI1 exoribonuclease 2 (eri2) from Xenopus laevis (African clawed frog).